Here is an 87-residue protein sequence, read N- to C-terminus: Chromosomal protein MC1b (87 aa).

Protects DNA against thermal denaturation and modulates transcription. In Methanothrix soehngenii (Methanosaeta concilii), this protein is Chromosomal protein MC1b.